A 105-amino-acid polypeptide reads, in one-letter code: Transcriptional regulator SutA (105 aa).

The segment covering 1–37 has biased composition (acidic residues); that stretch reads MSEEELEQDELDGADEDDGEELAAADDGEADSSDGDE. The segment at 1 to 105 is disordered; that stretch reads MSEEELEQDE…PDSKYGSRPI (105 aa). 2 stretches are compositionally biased toward basic and acidic residues: residues 59–83 and 92–105; these read AKQK…KVQE and PPKK…SRPI.

Interacts with RNA polymerase.

Causes widespread changes in gene expression, and plays a direct role in the regulation of genes encoding ribosomal components. Associates with chromosomal DNA through interaction with RNA polymerase. Contributes to biofilm formation and secondary metabolite production. Important during transitions to and from the survival state. This is Transcriptional regulator SutA from Pseudomonas aeruginosa (strain UCBPP-PA14).